The following is a 174-amino-acid chain: Ferredoxin-2, mitochondrial (174 aa).

Residues 1 to 43 constitute a mitochondrion transit peptide; sequence MAASMARGVSARVLLRAAGGSWGPRAGHAAVTSRTFGTTGERR. A disordered region spans residues 26-52; sequence AGHAAVTSRTFGTTGERRAGEEAADSP. The 2Fe-2S ferredoxin-type domain occupies 59-161; the sequence is VNVVFVDRSG…GVEFALPKIT (103 aa). [2Fe-2S] cluster is bound by residues cysteine 96, cysteine 102, cysteine 105, and cysteine 142.

This sequence belongs to the adrenodoxin/putidaredoxin family. As to quaternary structure, component of the mitochondrial core iron-sulfur cluster (ISC) complex composed of NFS1, LYRM4, NDUFAB1, ISCU, FXN, and FDX2; this complex is a heterohexamer containing two copies of each monomer. Form a heterodimer complex with NFS1. Interacts (in both their reduced and oxidized states) with the cysteine desulfurase (NFS1:LYRM4) complex; this interaction stimulates cysteine desulfurase activity, and serves as a reductant for Fe-S cluster assembly. Requires [2Fe-2S] cluster as cofactor.

The protein resides in the mitochondrion. It localises to the mitochondrion matrix. Functionally, electron donor, of the core iron-sulfur cluster (ISC) assembly complex, that acts to reduce the persulfide into sulfide during [2Fe-2S] clusters assembly on the scaffolding protein ISCU. The core iron-sulfur cluster (ISC) assembly complex is involved in the de novo synthesis of a [2Fe-2S] cluster, the first step of the mitochondrial iron-sulfur protein biogenesis. This process is initiated by the cysteine desulfurase complex (NFS1:LYRM4:NDUFAB1) that produces persulfide which is delivered on the scaffold protein ISCU in a FXN-dependent manner. Then this complex is stabilized by FDX2 which provides reducing equivalents to accomplish the [2Fe-2S] cluster assembly. Finally, the [2Fe-2S] cluster is transferred from ISCU to chaperone proteins, including HSCB, HSPA9 and GLRX5. Essential for coenzyme Q biosynthesis: together with FDXR, transfers the electrons required for the hydroxylation reaction performed by COQ6. The protein is Ferredoxin-2, mitochondrial of Mus musculus (Mouse).